Here is a 355-residue protein sequence, read N- to C-terminus: Probable NADPH-dependent quinone reductase tdiC (355 aa).

The protein belongs to the zinc-containing alcohol dehydrogenase family. NADPH is required as a cofactor.

It functions in the pathway secondary metabolite biosynthesis. Its function is as follows. Probable NADPH-dependent quinone reductase; part of the gene cluster that mediates the biosynthesis of terrequinone A, an antitumor agent. The first step in the biosynthetic pathway for terrequinone A is formation of indole pyruvic acid (IPA) from L-tryptophan by the aminotransferase tdiD. The nonribosomal peptide synthase tdiA then immediately converts unstable IPA to didemethylasterriquinone D (DDAQ D), via condensation of 2 IPA molecules. The symmetric connectivity of the 2 IPA molecules is thought to arise by head-to-tail dual Claisen condensations facilitated by the TE domain. TdiB then catalyzes reverse prenylation by transferring dimethylallyl diphosphate to carbon atom 2' of DDAQ D, to yield asterriquinone C-1. Finally, tdiC and tdiE enzymes robustly convert asterriquinone C-1 to terrequinone A via a transformation involving regular prenylation at carbon atom 5, which requires elimination of the hydroxy group on C-5. The polypeptide is Probable NADPH-dependent quinone reductase tdiC (Emericella nidulans (strain FGSC A4 / ATCC 38163 / CBS 112.46 / NRRL 194 / M139) (Aspergillus nidulans)).